The chain runs to 283 residues: MAMIDPLENNLFDLPDYENTEDETFPPLPPPTSPGRGDAEWAQANGDPDGNQQSETKDSSSAARKAVKRSIPKLDANRLVSERGLPALRHMFDNVKFKGKGHEAEDLKTLLRHMEHWAHRLFPKLQFDDFIDRVESLGNKKEVQTCLKRIRLDLPILHEDFTANEGGGGESNGLDMATEEVHSFSGNVGELDSLPGTTLTEEQQQRIKRNRQLALERRQAKMQCNSQSQHDELSPSYPEEELNIPVARDLTGALEDTQVTATNVAVTETEDRERELQCASEKQ.

The disordered stretch occupies residues 1–68 (MAMIDPLENN…SSSAARKAVK (68 aa)). The segment covering 15 to 24 (PDYENTEDET) has biased composition (acidic residues). The segment at 74–150 (LDANRLVSER…KEVQTCLKRI (77 aa)) is interaction with TIMELESS. Disordered stretches follow at residues 186-205 (GNVGELDSLPGTTLTEEQQQ) and 217-238 (RRQAKMQCNSQSQHDELSPSYP).

This sequence belongs to the CSM3 family. As to quaternary structure, interacts with TIMELESS, which impairs TIMELESS self-association.

It localises to the cytoplasm. Its subcellular location is the nucleus. Plays an important role in the control of DNA replication and the maintenance of replication fork stability. Important for cell survival after DNA damage or replication stress. May be required for the replication checkpoint induced by hydroxyurea or ultraviolet light. This is TIMELESS-interacting protein (TIPIN) from Gallus gallus (Chicken).